The chain runs to 98 residues: MMCGGTSATQPATAETQAIADKVKSQLEEKENKKFPVFKALEFKSQLVAGKNYFIKVQVDEDDFVHIRVFESLPHENKPVALTSYQTNKGRHDELTYF.

An N-acetylmethionine modification is found at Met-1. Residues 46–50 (QLVAG) carry the Secondary area of contact motif.

This sequence belongs to the cystatin family. In terms of assembly, able to form dimers stabilized by noncovalent forces.

Its subcellular location is the cytoplasm. Its function is as follows. This is an intracellular thiol proteinase inhibitor. The protein is Cystatin-B (CSTB) of Bos taurus (Bovine).